The following is an 86-amino-acid chain: Large ribosomal subunit protein bL27 (86 aa).

The tract at residues 1–22 (MATKKAGGSSRNGRDSAGRRLG) is disordered.

This sequence belongs to the bacterial ribosomal protein bL27 family.

This chain is Large ribosomal subunit protein bL27, found in Rickettsia peacockii (strain Rustic).